A 64-amino-acid chain; its full sequence is Translation machinery-associated protein 7 homolog (64 aa).

The segment at 1 to 64 (MSGREGGKKK…QGGIKKSGKK (64 aa)) is disordered. A compositionally biased stretch (basic and acidic residues) spans 27–44 (VAFKQKQKEQQKALDAAK).

The protein belongs to the TMA7 family.

The protein is Translation machinery-associated protein 7 homolog of Anopheles funestus (African malaria mosquito).